A 291-amino-acid chain; its full sequence is MAALKDIKRKVAAVEKTKQITRAMNMVAASKFRTSQTRMESFRPYAMKFMEVLSSLAVRVSPDAHPLLAAREAKRIRVVSMSSDRGLCGGFNSSLIKSTERFVREKIAEGLEVDLTPIGRKVREYFKRKYALVSDRADVMSKFDMTLAVEIAEDVIDPFVNEEYDELYLIYNEFINVSMQRPAVVRLLPLPSVGQDAEIEAEKRIDYNYEPSDEELIGKLLPMYIHVLIFRALLETSAGENGARMAAMDNATRNCDEMISTLTLQYNKVRQSAITAELMDIVGGTEALAKG.

The protein belongs to the ATPase gamma chain family. As to quaternary structure, F-type ATPases have 2 components, CF(1) - the catalytic core - and CF(0) - the membrane proton channel. CF(1) has five subunits: alpha(3), beta(3), gamma(1), delta(1), epsilon(1). CF(0) has three main subunits: a, b and c.

Its subcellular location is the cell inner membrane. Its function is as follows. Produces ATP from ADP in the presence of a proton gradient across the membrane. The gamma chain is believed to be important in regulating ATPase activity and the flow of protons through the CF(0) complex. This chain is ATP synthase gamma chain, found in Syntrophus aciditrophicus (strain SB).